Reading from the N-terminus, the 168-residue chain is Putative defense protein 1 (168 aa).

A signal peptide spans M1–A18. The Reelin domain occupies F19–H168. The cysteines at positions 28 and 105 are disulfide-linked.

Belongs to the insect defense protein family. Very highly expressed in midgut, and highly expressed in fat body, silk gland and epidermis.

Its subcellular location is the secreted. As this protein is expressed upon bacterial infection, it may have antimicrobial activity. The protein is Putative defense protein 1 of Antheraea mylitta (Tasar silkworm).